A 121-amino-acid polypeptide reads, in one-letter code: MTKEQIIEAVKNMTVLELNDLVKAIEEEFGVTAAAPVVVAGGAAAGAAAEEKTEFDVILADGGAQKIKVIKVVRELTGLGLKEAKDLVDNTPKPVKEGVSKEEAEEIKAKLEEAGAKVEIK.

It belongs to the bacterial ribosomal protein bL12 family. As to quaternary structure, homodimer. Part of the ribosomal stalk of the 50S ribosomal subunit. Forms a multimeric L10(L12)X complex, where L10 forms an elongated spine to which 2 to 4 L12 dimers bind in a sequential fashion. Binds GTP-bound translation factors.

In terms of biological role, forms part of the ribosomal stalk which helps the ribosome interact with GTP-bound translation factors. Is thus essential for accurate translation. This chain is Large ribosomal subunit protein bL12, found in Anoxybacillus flavithermus (strain DSM 21510 / WK1).